A 335-amino-acid chain; its full sequence is Probable magnesium transporter NIPA1 (335 aa).

Residues 1–7 (MDQMSPD) lie on the Extracellular side of the membrane. A helical membrane pass occupies residues 8–28 (NINGVILAVSSSIFIGSSFII). Residues 29-55 (KKKGLKKAGASGVRAGEGGYGYLKEPW) lie on the Cytoplasmic side of the membrane. The helical transmembrane segment at 56–76 (WWAGMITMIVGEVANFAAYAF) threads the bilayer. The Extracellular portion of the chain corresponds to 77 to 79 (APA). The chain crosses the membrane as a helical span at residues 80-100 (ILVTPLGALSIIFSAVLAHFI). Over 101–104 (LKEK) the chain is Cytoplasmic. A helical transmembrane segment spans residues 105-125 (LHMFGILGCILCVVGSTTIVL). Residues 126–143 (HAPHEQKIESVKQIWQLA) lie on the Extracellular side of the membrane. The helical transmembrane segment at 144 to 164 (IEPGFLVYSAVIVIVVAILIF) threads the bilayer. Residues 165–179 (YYEPRYGKTHMIVYV) lie on the Cytoplasmic side of the membrane. Residues 180-200 (GICSLMGSLTVMSVKAVAIAI) traverse the membrane as a helical segment. The Extracellular segment spans residues 201–212 (KLTFSGTNQFKY). A helical membrane pass occupies residues 213–233 (FNTWIFILVVATCCILQINYL). The Cytoplasmic portion of the chain corresponds to 234–244 (NKALDTFNTAV). The chain crosses the membrane as a helical span at residues 245–265 (ISPVYYVMFTTFTIIASMIMF). At 266–272 (KDWASQS) the chain is on the extracellular side. The helical transmembrane segment at 273–293 (GLKIATELCGFVTILSGTFLL) threads the bilayer. Over 294–335 (HKTKDMGNSASGRGSISMPTRDTPVFTNSGSGRSSSSDKVAS) the chain is Cytoplasmic. Positions 303–321 (ASGRGSISMPTRDTPVFTN) are enriched in polar residues. A disordered region spans residues 303–335 (ASGRGSISMPTRDTPVFTNSGSGRSSSSDKVAS). Residues 322–335 (SGSGRSSSSDKVAS) are compositionally biased toward low complexity.

The protein belongs to the NIPA (TC 2.A.7) family. As to quaternary structure, homodimer.

It localises to the cell membrane. The protein localises to the early endosome. Acts as a Mg(2+) transporter. Can also transport other divalent cations such as Fe(2+), Sr(2+), Ba(2+), Mn(2+) and Co(2+) but to a much less extent than Mg(2+). This Arabidopsis thaliana (Mouse-ear cress) protein is Probable magnesium transporter NIPA1.